Here is a 125-residue protein sequence, read N- to C-terminus: Small ribosomal subunit protein uS13 (125 aa).

The interval 95–125 (GLPLRGQRTKTNARTRKGKRKTVANKKIASK) is disordered.

Belongs to the universal ribosomal protein uS13 family. Part of the 30S ribosomal subunit. Forms a loose heterodimer with protein S19. Forms two bridges to the 50S subunit in the 70S ribosome.

Its function is as follows. Located at the top of the head of the 30S subunit, it contacts several helices of the 16S rRNA. In the 70S ribosome it contacts the 23S rRNA (bridge B1a) and protein L5 of the 50S subunit (bridge B1b), connecting the 2 subunits; these bridges are implicated in subunit movement. Contacts the tRNAs in the A and P-sites. The chain is Small ribosomal subunit protein uS13 from Borreliella burgdorferi (strain ATCC 35210 / DSM 4680 / CIP 102532 / B31) (Borrelia burgdorferi).